Reading from the N-terminus, the 543-residue chain is uncharacterized protein (543 aa).

Residues 1–59 (MLKKNDIVEVEIVDLTHEGAGVAKVDGLVFFVENALPSEKILMRVLKVNKKIGFGKVEK) enclose the TRAM domain. The S-adenosyl-L-methionine site is built by Gln-283, Tyr-312, Glu-333, and Asp-381. Cys-408 (nucleophile) is an active-site residue.

It belongs to the class I-like SAM-binding methyltransferase superfamily. RNA M5U methyltransferase family.

This is an uncharacterized protein from Streptococcus pneumoniae serotype 4 (strain ATCC BAA-334 / TIGR4).